The primary structure comprises 166 residues: UPF0254 protein Mevan_0254 (166 aa).

The protein belongs to the UPF0254 family.

This is UPF0254 protein Mevan_0254 from Methanococcus vannielii (strain ATCC 35089 / DSM 1224 / JCM 13029 / OCM 148 / SB).